We begin with the raw amino-acid sequence, 638 residues long: Nucleolar protein 4 (638 aa).

Disordered stretches follow at residues 210–312, 343–403, 503–535, and 573–603; these read QQDE…SPLS, EREA…TDGV, NAAKRMRLERQQDESAPADKQCKPEATQATYST, and SSGPTDLSMKRQLATSSGSSSSSNSRPQLSP. Residues 211–225 are compositionally biased toward acidic residues; the sequence is QDEDESSIESDEFDM. Polar residues-rich tracts occupy residues 229–254, 263–281, 302–312, and 351–363; these read TRMSAVNSDLSSNLEERMQSPQNLHG, ESFNGNETLGHSSIASGGT, QPLNLSDSPLS, and SKSPAHSYSSYDS. Basic and acidic residues-rich tracts occupy residues 364-374, 391-403, and 503-515; these read GKNESVDRGAE, HDDSEKVNETDGV, and NAAKRMRLERQQD. Over residues 588-597 the composition is skewed to low complexity; that stretch reads SSGSSSSSNS.

In terms of tissue distribution, expressed predominantly in fetal brain, adult brain and testis.

It localises to the nucleus. Its subcellular location is the nucleolus. The polypeptide is Nucleolar protein 4 (NOL4) (Homo sapiens (Human)).